The following is a 307-amino-acid chain: Branched-chain-amino-acid aminotransferase (307 aa).

An N6-(pyridoxal phosphate)lysine modification is found at K160.

It belongs to the class-IV pyridoxal-phosphate-dependent aminotransferase family. It depends on pyridoxal 5'-phosphate as a cofactor.

The enzyme catalyses L-leucine + 2-oxoglutarate = 4-methyl-2-oxopentanoate + L-glutamate. It catalyses the reaction L-isoleucine + 2-oxoglutarate = (S)-3-methyl-2-oxopentanoate + L-glutamate. The catalysed reaction is L-valine + 2-oxoglutarate = 3-methyl-2-oxobutanoate + L-glutamate. It functions in the pathway amino-acid biosynthesis; L-isoleucine biosynthesis; L-isoleucine from 2-oxobutanoate: step 4/4. It participates in amino-acid biosynthesis; L-leucine biosynthesis; L-leucine from 3-methyl-2-oxobutanoate: step 4/4. Its pathway is amino-acid biosynthesis; L-valine biosynthesis; L-valine from pyruvate: step 4/4. Acts on leucine, isoleucine and valine. In Pseudomonas aeruginosa (strain ATCC 15692 / DSM 22644 / CIP 104116 / JCM 14847 / LMG 12228 / 1C / PRS 101 / PAO1), this protein is Branched-chain-amino-acid aminotransferase (ilvE).